The following is a 68-amino-acid chain: Protein transport protein Sec61 subunit gamma (68 aa).

Over 1–32 (MDQIMQFVEPSRQFVKDSIRLVKRCTKPDRKE) the chain is Cytoplasmic. The helical transmembrane segment at 33–61 (FQKIAMATAIGFAIMGFIGFFVKLIHIPI) threads the bilayer. The Extracellular segment spans residues 62–68 (NNIIVGG).

The protein belongs to the SecE/SEC61-gamma family. In terms of assembly, the SEC61 channel-forming translocon complex consists of channel-forming core components SEC61A1, SEC61B and SEC61G and different auxiliary components such as SEC62 and SEC63. The SEC61 channel associates with the multi-pass translocon (MPT) complex.

Its subcellular location is the endoplasmic reticulum membrane. Functionally, component of SEC61 channel-forming translocon complex that mediates transport of signal peptide-containing precursor polypeptides across the endoplasmic reticulum (ER). Forms a ribosome receptor and a gated pore in the ER membrane, both functions required for cotranslational translocation of nascent polypeptides. The SEC61 channel is also involved in ER membrane insertion of transmembrane proteins: it mediates membrane insertion of the first few transmembrane segments of proteins, while insertion of subsequent transmembrane regions of multi-pass membrane proteins is mediated by the multi-pass translocon (MPT) complex. This chain is Protein transport protein Sec61 subunit gamma (sec61g), found in Gadus morhua (Atlantic cod).